The following is a 184-amino-acid chain: Probable DNA-directed RNA polymerase subunit delta (184 aa).

Residues 14 to 81 (LSMIEVARAI…GENVWALRSW (68 aa)) enclose the HTH HARE-type domain. Disordered stretches follow at residues 88-107 (DEEVNHPEDEEEDDSRKHHK) and 118-184 (GDDD…DEDD). The span at 118–164 (GDDDIIDYDNDDPEDDDLDAATDDSDDDYSDDDSDYDEDNDDADDVL) shows a compositional bias: acidic residues.

Belongs to the RpoE family. RNAP is composed of a core of 2 alpha, a beta and a beta' subunits. The core is associated with a delta subunit and one of several sigma factors.

Functionally, participates in both the initiation and recycling phases of transcription. In the presence of the delta subunit, RNAP displays an increased specificity of transcription, a decreased affinity for nucleic acids, and an increased efficiency of RNA synthesis because of enhanced recycling. In Lactobacillus acidophilus (strain ATCC 700396 / NCK56 / N2 / NCFM), this protein is Probable DNA-directed RNA polymerase subunit delta.